Reading from the N-terminus, the 188-residue chain is Elongation factor P (188 aa).

It belongs to the elongation factor P family.

Its subcellular location is the cytoplasm. Its pathway is protein biosynthesis; polypeptide chain elongation. Functionally, involved in peptide bond synthesis. Stimulates efficient translation and peptide-bond synthesis on native or reconstituted 70S ribosomes in vitro. Probably functions indirectly by altering the affinity of the ribosome for aminoacyl-tRNA, thus increasing their reactivity as acceptors for peptidyl transferase. The protein is Elongation factor P of Gemmatimonas aurantiaca (strain DSM 14586 / JCM 11422 / NBRC 100505 / T-27).